A 567-amino-acid chain; its full sequence is Proline--tRNA ligase (567 aa).

It belongs to the class-II aminoacyl-tRNA synthetase family. ProS type 1 subfamily. As to quaternary structure, homodimer.

The protein resides in the cytoplasm. The catalysed reaction is tRNA(Pro) + L-proline + ATP = L-prolyl-tRNA(Pro) + AMP + diphosphate. Its function is as follows. Catalyzes the attachment of proline to tRNA(Pro) in a two-step reaction: proline is first activated by ATP to form Pro-AMP and then transferred to the acceptor end of tRNA(Pro). As ProRS can inadvertently accommodate and process non-cognate amino acids such as alanine and cysteine, to avoid such errors it has two additional distinct editing activities against alanine. One activity is designated as 'pretransfer' editing and involves the tRNA(Pro)-independent hydrolysis of activated Ala-AMP. The other activity is designated 'posttransfer' editing and involves deacylation of mischarged Ala-tRNA(Pro). The misacylated Cys-tRNA(Pro) is not edited by ProRS. The polypeptide is Proline--tRNA ligase (Geobacillus thermodenitrificans (strain NG80-2)).